Reading from the N-terminus, the 236-residue chain is Peptidase E (236 aa).

Active-site charge relay system residues include Ser122, Asp137, and His159.

Belongs to the peptidase S51 family.

It localises to the cytoplasm. It carries out the reaction Dipeptidase E catalyzes the hydrolysis of dipeptides Asp-|-Xaa. It does not act on peptides with N-terminal Glu, Asn or Gln, nor does it cleave isoaspartyl peptides.. Its function is as follows. Hydrolyzes dipeptides containing N-terminal aspartate residues. May play a role in allowing the cell to use peptide aspartate to spare carbon otherwise required for the synthesis of the aspartate family of amino acids. This Shewanella putrefaciens (strain CN-32 / ATCC BAA-453) protein is Peptidase E.